The chain runs to 240 residues: Adenylate dimethylallyltransferase (240 aa).

This sequence belongs to the isopentenyl transferase family.

It catalyses the reaction dimethylallyl diphosphate + AMP = N(6)-(dimethylallyl)adenosine 5'-phosphate + diphosphate. In terms of biological role, transfers dimethylallyl groups to AMP as part of the biosynthesis of cytokinin phytohormones. The chain is Adenylate dimethylallyltransferase (izt) from Agrobacterium fabrum (strain C58 / ATCC 33970) (Agrobacterium tumefaciens (strain C58)).